A 529-amino-acid polypeptide reads, in one-letter code: UDP-glucuronosyltransferase 2B7 (529 aa).

Positions 1-23 (MSVKWTSVILLIQLSFCFSSGNC) are cleaved as a signal peptide. 3 N-linked (GlcNAc...) asparagine glycosylation sites follow: Asn67, Asn68, and Asn315. UDP-alpha-D-glucuronate-binding positions include 373-379 (THGGANG) and Asp398. A helical transmembrane segment spans residues 493-509 (VIGFLLVCVATVIFIVT).

Belongs to the UDP-glycosyltransferase family.

The protein resides in the endoplasmic reticulum membrane. It catalyses the reaction glucuronate acceptor + UDP-alpha-D-glucuronate = acceptor beta-D-glucuronoside + UDP + H(+). It carries out the reaction 17alpha-estradiol + UDP-alpha-D-glucuronate = 17alpha-estradiol 17-O-(beta-D-glucuronate) + UDP + H(+). The enzyme catalyses 17beta-estradiol + UDP-alpha-D-glucuronate = 17beta-estradiol 17-O-(beta-D-glucuronate) + UDP + H(+). The catalysed reaction is 2-hydroxy-17beta-estradiol + UDP-alpha-D-glucuronate = 2-hydroxy-17beta-estradiol 3-O-(beta-D-glucuronate) + UDP + H(+). It catalyses the reaction 4-hydroxy-17beta-estradiol + UDP-alpha-D-glucuronate = 17beta-estradiol 4-O-(beta-D-glucuronate) + UDP + H(+). It carries out the reaction 4-hydroxyestrone + UDP-alpha-D-glucuronate = estrone 4-O-(beta-D-glucuronate) + UDP + H(+). The enzyme catalyses 16alpha-hydroxyestrone + UDP-alpha-D-glucuronate = 16alpha-hydroxyestrone 16-O-(beta-D-glucuronate) + UDP + H(+). The catalysed reaction is 16alpha,17beta-estriol + UDP-alpha-D-glucuronate = 16alpha,17beta-estriol 16-O-(beta-D-glucuronate) + UDP + H(+). It catalyses the reaction 16beta,17beta-estriol + UDP-alpha-D-glucuronate = 16beta,17beta-estriol 16-O-(beta-D-glucuronate) + UDP + H(+). It carries out the reaction 16alpha,17alpha-estriol + UDP-alpha-D-glucuronate = 16alpha,17alpha-estriol 16-O-(beta-D-glucuronate) + UDP + H(+). The enzyme catalyses 16alpha,17alpha-estriol + UDP-alpha-D-glucuronate = 16alpha,17alpha-estriol 17-O-(beta-D-glucuronate) + UDP + H(+). The catalysed reaction is epitestosterone + UDP-alpha-D-glucuronate = epitestosterone 17-O-(beta-D-glucuronate) + UDP + H(+). It catalyses the reaction hyodeoxycholate + UDP-alpha-D-glucuronate = hyodeoxycholate 6-O-(beta-D-glucuronate) + UDP + H(+). It carries out the reaction hyocholate + UDP-alpha-D-glucuronate = hyocholate 6-O-(beta-D-glucuronate) + UDP + H(+). The enzyme catalyses all-trans-retinoate + UDP-alpha-D-glucuronate = all-trans-retinoyl-1-O-(beta-D-glucuronate) + UDP. The catalysed reaction is all-trans-4-hydroxyretinoate + UDP-alpha-D-glucuronate = all-trans-4-hydroxy-4-O-(beta-D-glucuronide)-retinoate + UDP + H(+). It catalyses the reaction (E)-ferulate + UDP-alpha-D-glucuronate = (E)-ferulic acid beta-D-glucuronate ester + UDP. It carries out the reaction 8-iso-prostaglandin F2alpha + UDP-alpha-D-glucuronate = 8-iso-prostaglandin F2alpha-glucuronide + UDP + H(+). The enzyme catalyses 5-epi-5-F2t-IsoP + UDP-alpha-D-glucuronate = 5-epi-5-F2t-IsoP-glucuronide + UDP + H(+). The catalysed reaction is (5Z,8Z,11Z,14Z)-eicosatetraenoate + UDP-alpha-D-glucuronate = O-[(5Z),(8Z),(11Z),(14Z)-eicosatetraenoyl]-beta-D-glucuronate + UDP. It catalyses the reaction 15-hydroxy-(5Z,8Z,11Z,13E)-eicosatetraenoate + UDP-alpha-D-glucuronate = 15-O-(beta-D-glucuronosyl)-(5Z,8Z,11Z,14Z)-eicosatetraenoate + UDP + H(+). It carries out the reaction 20-hydroxy-(5Z,8Z,11Z,14Z)-eicosatetraenoate + UDP-alpha-D-glucuronate = 20-O-(beta-D-glucuronosyl)-(5Z,8Z,11Z,14Z)-eicosatetraenoate + UDP + H(+). The enzyme catalyses (E)-ferulate + UDP-alpha-D-glucuronate = (E)-4-O-(beta-D-glucuronosyl)-ferulate + UDP + H(+). The catalysed reaction is prostaglandin B1 + UDP-alpha-D-glucuronate = 15-O-(beta-D-glucuronosyl)-prostaglandin B1 + UDP + H(+). It catalyses the reaction mycophenolate + UDP-alpha-D-glucuronate = mycophenolic acid O-acyl-beta-D-glucuronide + UDP. It carries out the reaction losartan + UDP-alpha-D-glucuronate = losartan-2-N-beta-D-glucuronide + UDP. The enzyme catalyses candesartan + UDP-alpha-D-glucuronate = candesartan O-beta-D-glucuronoside + UDP. The catalysed reaction is candesartan + UDP-alpha-D-glucuronate = candesartan-2-N-beta-D-glucuronide + UDP. It catalyses the reaction zolasartan + UDP-alpha-D-glucuronate = zolarsartan O-beta-D-glucuronoside + UDP. UDP-glucuronosyltransferase (UGT) that catalyzes phase II biotransformation reactions in which lipophilic substrates are conjugated with glucuronic acid to increase the metabolite's water solubility, thereby facilitating excretion into either the urine or bile. Essential for the elimination and detoxification of drugs, xenobiotics and endogenous compounds. Catalyzes the glucuronidation of endogenous steroid hormones such as androgens (epitestosterone, androsterone) and estrogens (estradiol, epiestradiol, estriol, catechol estrogens). Also regulates the levels of retinoic acid, a major metabolite of vitamin A involved in apoptosis, cellular growth and differentiation, and embryonic development. Contributes to bile acid (BA) detoxification by catalyzing the glucuronidation of BA substrates, which are natural detergents for dietary lipids absorption. Involved in the glucuronidation of arachidonic acid (AA) and AA-derived eicosanoids including 15-HETE, 20-HETE, PGE2, PGB1 and F2-isoprostanes (8-iso-PGF2alpha and 5-epi-5-F2t-IsoP). Involved in the glucuronidation of the phytochemical ferulic acid at the phenolic or the carboxylic acid group. Involved in the glucuronidation of the AGTR1 angiotensin receptor antagonist losartan, caderastan and zolarsatan, drugs which can inhibit the effect of angiotensin II. Also metabolizes mycophenolate, an immunosuppressive agent. The chain is UDP-glucuronosyltransferase 2B7 from Homo sapiens (Human).